A 660-amino-acid chain; its full sequence is MKAVVFAYHDMGCLGVQALLDAGYEISAIFTHADNPAEKVFYGSVSRLAALAGIPVYAPDDINHPLWVERIAQLAPDVIFSFYYRNLLNNEILKLAPHGAFNLHGSLLPKYRGRAPLNWVLENGENETGVTLHRMVAKADAGAIIAQQRVAIDPEDAALTLHKKLCQSASQMLEYALPAIKQGQTQETAQNESEATYFGRRKPEDSFLDWNKPATVLHNMVRAVADPWPGAFSYVGTQKFTIWSSRVHPRVNAAQPGSVISVAPFLIACGDGALEVITGQSVDGITMQGSQLAQTLGLVEGSRLNSQPVCTVQRRTRVLILGVNGFIGNHLTERLLREDHYEVYGLDIGSDAISRFLTHPNFHFVEGDISIHSEWIEYHIKKCDVVLPLVAIATPIEYTRNPLRVFELDFEENLRIIRYCVQYHKRIIFPSTSEVYGMCTDKFFDEDHSNLIVGPINKPRWIYSVSKQLLDRVIWAYGEKEGLQFTLFRPFNWMGPRLDNLNAARIGSSRAITQLILNLVEGSPIKLIDGGKQKRCFTDIRDGIEALYRIIENTGNRCDGEIINIGNPDNEASIEELGKMLLASFDKHPLRQHFPPFAGFRVVESSSYYGKGYQDVEHRKPSIRNARRCLDWEPTIDMQETIDETLDFFLRTVDIVEKSS.

The segment at 1 to 304 (MKAVVFAYHD…TLGLVEGSRL (304 aa)) is formyltransferase ArnAFT. H104 (proton donor; for formyltransferase activity) is an active-site residue. (6R)-10-formyltetrahydrofolate contacts are provided by residues R114 and 136–140 (VAKAD). The segment at 314–660 (RRTRVLILGV…RTVDIVEKSS (347 aa)) is dehydrogenase ArnADH. NAD(+) is bound by residues D347 and 368-369 (DI). UDP-alpha-D-glucuronate contacts are provided by residues A393, Y398, and 432–433 (TS). The active-site Proton acceptor; for decarboxylase activity is the E434. UDP-alpha-D-glucuronate is bound by residues R460, N492, 526–535 (KLIDGGKQKR), and Y613. The active-site Proton donor; for decarboxylase activity is the R619.

The protein in the N-terminal section; belongs to the Fmt family. UDP-L-Ara4N formyltransferase subfamily. It in the C-terminal section; belongs to the NAD(P)-dependent epimerase/dehydratase family. UDP-glucuronic acid decarboxylase subfamily. Homohexamer, formed by a dimer of trimers.

The catalysed reaction is UDP-alpha-D-glucuronate + NAD(+) = UDP-beta-L-threo-pentopyranos-4-ulose + CO2 + NADH. It catalyses the reaction UDP-4-amino-4-deoxy-beta-L-arabinose + (6R)-10-formyltetrahydrofolate = UDP-4-deoxy-4-formamido-beta-L-arabinose + (6S)-5,6,7,8-tetrahydrofolate + H(+). The protein operates within nucleotide-sugar biosynthesis; UDP-4-deoxy-4-formamido-beta-L-arabinose biosynthesis; UDP-4-deoxy-4-formamido-beta-L-arabinose from UDP-alpha-D-glucuronate: step 1/3. Its pathway is nucleotide-sugar biosynthesis; UDP-4-deoxy-4-formamido-beta-L-arabinose biosynthesis; UDP-4-deoxy-4-formamido-beta-L-arabinose from UDP-alpha-D-glucuronate: step 3/3. It participates in bacterial outer membrane biogenesis; lipopolysaccharide biosynthesis. Its function is as follows. Bifunctional enzyme that catalyzes the oxidative decarboxylation of UDP-glucuronic acid (UDP-GlcUA) to UDP-4-keto-arabinose (UDP-Ara4O) and the addition of a formyl group to UDP-4-amino-4-deoxy-L-arabinose (UDP-L-Ara4N) to form UDP-L-4-formamido-arabinose (UDP-L-Ara4FN). The modified arabinose is attached to lipid A and is required for resistance to polymyxin and cationic antimicrobial peptides. The chain is Bifunctional polymyxin resistance protein ArnA from Escherichia fergusonii (strain ATCC 35469 / DSM 13698 / CCUG 18766 / IAM 14443 / JCM 21226 / LMG 7866 / NBRC 102419 / NCTC 12128 / CDC 0568-73).